The following is a 258-amino-acid chain: 6-carboxyhexanoate--CoA ligase (258 aa).

It belongs to the BioW family. In terms of assembly, homodimer. Mg(2+) serves as cofactor.

It catalyses the reaction heptanedioate + ATP + CoA = 6-carboxyhexanoyl-CoA + AMP + diphosphate. Its pathway is metabolic intermediate metabolism; pimeloyl-CoA biosynthesis; pimeloyl-CoA from pimelate: step 1/1. Its function is as follows. Catalyzes the transformation of pimelate into pimeloyl-CoA with concomitant hydrolysis of ATP to AMP. This Bacillus spizizenii (strain ATCC 23059 / NRRL B-14472 / W23) (Bacillus subtilis subsp. spizizenii) protein is 6-carboxyhexanoate--CoA ligase.